We begin with the raw amino-acid sequence, 139 residues long: Nucleoside diphosphate kinase (139 aa).

K11, F59, R87, T93, R104, and N114 together coordinate ATP. The active-site Pros-phosphohistidine intermediate is the H117.

This sequence belongs to the NDK family. In terms of assembly, homotetramer. It depends on Mg(2+) as a cofactor.

The protein resides in the cytoplasm. The enzyme catalyses a 2'-deoxyribonucleoside 5'-diphosphate + ATP = a 2'-deoxyribonucleoside 5'-triphosphate + ADP. The catalysed reaction is a ribonucleoside 5'-diphosphate + ATP = a ribonucleoside 5'-triphosphate + ADP. Its function is as follows. Major role in the synthesis of nucleoside triphosphates other than ATP. The ATP gamma phosphate is transferred to the NDP beta phosphate via a ping-pong mechanism, using a phosphorylated active-site intermediate. This is Nucleoside diphosphate kinase from Pasteurella multocida (strain Pm70).